Consider the following 261-residue polypeptide: Chloroplastic import inner membrane translocase subunit HP30-1 (261 aa).

A run of 4 helical transmembrane segments spans residues alanine 59–methionine 77, asparagine 113–lysine 129, serine 139–serine 155, and methionine 163–phenylalanine 180.

It belongs to the Tim17/Tim22/Tim23 family. In terms of assembly, probable component of a protein-conducting channel made of HP30-1, HP30-2 and HP20 that mediates the import of transit sequence-less proteins into the chloroplastic inner membrane. Interacts with CEQORH.

It localises to the plastid. The protein localises to the chloroplast inner membrane. Together with HP30-2 and HP20, triggers the import and insertion of transit sequence-less multi-pass transmembrane proteins (e.g. CEQORH) into the chloroplastic inner membrane. This chain is Chloroplastic import inner membrane translocase subunit HP30-1, found in Arabidopsis thaliana (Mouse-ear cress).